A 297-amino-acid polypeptide reads, in one-letter code: 4-diphosphocytidyl-2-C-methyl-D-erythritol kinase (297 aa).

Lys19 is an active-site residue. 105 to 115 is an ATP binding site; that stretch reads PIASGIGGGSA. Asp147 is an active-site residue.

Belongs to the GHMP kinase family. IspE subfamily.

It catalyses the reaction 4-CDP-2-C-methyl-D-erythritol + ATP = 4-CDP-2-C-methyl-D-erythritol 2-phosphate + ADP + H(+). The protein operates within isoprenoid biosynthesis; isopentenyl diphosphate biosynthesis via DXP pathway; isopentenyl diphosphate from 1-deoxy-D-xylulose 5-phosphate: step 3/6. In terms of biological role, catalyzes the phosphorylation of the position 2 hydroxy group of 4-diphosphocytidyl-2C-methyl-D-erythritol. The chain is 4-diphosphocytidyl-2-C-methyl-D-erythritol kinase from Rhizobium etli (strain CIAT 652).